Consider the following 179-residue polypeptide: Large ribosomal subunit protein uL5 (179 aa).

The protein belongs to the universal ribosomal protein uL5 family. In terms of assembly, part of the 50S ribosomal subunit; part of the 5S rRNA/L5/L18/L25 subcomplex. Contacts the 5S rRNA and the P site tRNA. Forms a bridge to the 30S subunit in the 70S ribosome.

Its function is as follows. This is one of the proteins that bind and probably mediate the attachment of the 5S RNA into the large ribosomal subunit, where it forms part of the central protuberance. In the 70S ribosome it contacts protein S13 of the 30S subunit (bridge B1b), connecting the 2 subunits; this bridge is implicated in subunit movement. Contacts the P site tRNA; the 5S rRNA and some of its associated proteins might help stabilize positioning of ribosome-bound tRNAs. The polypeptide is Large ribosomal subunit protein uL5 (Bacillus cereus (strain G9842)).